A 192-amino-acid chain; its full sequence is dCTP deaminase, dUMP-forming (192 aa).

Residues 101-106 (KSSLGR), Asp119, 127-129 (TLE), Gln148, Tyr162, and Gln174 each bind dCTP. Catalysis depends on Glu129, which acts as the Proton donor/acceptor. Residues 171–192 (YQGQRGPTPSRSWQSWHTWPTR) are disordered.

The protein belongs to the dCTP deaminase family. As to quaternary structure, homotrimer.

It catalyses the reaction dCTP + 2 H2O = dUMP + NH4(+) + diphosphate. It functions in the pathway pyrimidine metabolism; dUMP biosynthesis; dUMP from dCTP: step 1/1. Bifunctional enzyme that catalyzes both the deamination of dCTP to dUTP and the hydrolysis of dUTP to dUMP without releasing the toxic dUTP intermediate. The sequence is that of dCTP deaminase, dUMP-forming from Salinispora arenicola (strain CNS-205).